A 543-amino-acid polypeptide reads, in one-letter code: Exodeoxyribonuclease 7 large subunit (543 aa).

The tract at residues 498 to 543 (VTGEGDKASPPPQAASATTTPAPGRPNPLPKSPKKSEPPAGQGSLF) is disordered.

This sequence belongs to the XseA family. As to quaternary structure, heterooligomer composed of large and small subunits.

Its subcellular location is the cytoplasm. The catalysed reaction is Exonucleolytic cleavage in either 5'- to 3'- or 3'- to 5'-direction to yield nucleoside 5'-phosphates.. Functionally, bidirectionally degrades single-stranded DNA into large acid-insoluble oligonucleotides, which are then degraded further into small acid-soluble oligonucleotides. The sequence is that of Exodeoxyribonuclease 7 large subunit from Allorhizobium ampelinum (strain ATCC BAA-846 / DSM 112012 / S4) (Agrobacterium vitis (strain S4)).